Here is a 204-residue protein sequence, read N- to C-terminus: Tetraspanin-13 (204 aa).

At 1–19 (MVCGGFSCSKNCLCALNLL) the chain is on the cytoplasmic side. The helical transmembrane segment at 20-40 (YTLVSLLLIGIAAWGIGFGLI) threads the bilayer. The Extracellular segment spans residues 41-44 (SSLR). A helical membrane pass occupies residues 45 to 65 (VVGVVIAVGIFLFLIALVGLI). The Cytoplasmic portion of the chain corresponds to 66-72 (GAVKHHQ). A helical transmembrane segment spans residues 73–93 (VLLFFYMIILLLVFIVQFSVS). The Extracellular portion of the chain corresponds to 94–167 (CACLALNREQ…IGEYAGEVLR (74 aa)). 2 N-linked (GlcNAc...) asparagine glycosylation sites follow: N113 and N137. At S143 the chain carries Phosphoserine. Residues 168–188 (FVGGIGLFFSFTEILGVWLTY) form a helical membrane-spanning segment. The Cytoplasmic portion of the chain corresponds to 189 to 204 (RYRNQKDPRANPSAFL).

This sequence belongs to the tetraspanin (TM4SF) family.

The protein resides in the membrane. The polypeptide is Tetraspanin-13 (Tspan13) (Mus musculus (Mouse)).